The sequence spans 55 residues: MSTSRKLKSQGMRRGKNRTPHKGVKRSGSKRKYRKSSLKSRKRCDDANRNLRSHL.

The span at 1–42 (MSTSRKLKSQGMRRGKNRTPHKGVKRSGSKRKYRKSSLKSRK) shows a compositional bias: basic residues. The interval 1 to 55 (MSTSRKLKSQGMRRGKNRTPHKGVKRSGSKRKYRKSSLKSRKRCDDANRNLRSHL) is disordered. 4 positions are modified to phosphoserine: Ser9, Ser36, Ser37, and Ser40.

It belongs to the nuclear transition protein 1 family. As to expression, testis.

The protein localises to the nucleus. Its subcellular location is the chromosome. Plays a key role in the replacement of histones to protamine in the elongating spermatids of mammals. In condensing spermatids, loaded onto the nucleosomes, where it promotes the recruitment and processing of protamines, which are responsible for histone eviction. This chain is Spermatid nuclear transition protein 1 (TNP1), found in Bos taurus (Bovine).